The chain runs to 334 residues: Protein-methionine-sulfoxide reductase catalytic subunit MsrP (334 aa).

Residues 1-44 constitute a signal peptide (tat-type signal); that stretch reads MKKIRPLTEADVTAESAFFMQRRQVLKALGISAAALSLPSTAQA. Mo-molybdopterin is bound by residues Asn-88, 91 to 92, Cys-146, Thr-181, Asn-233, Arg-238, and 249 to 251; these read YE and GIK.

This sequence belongs to the MsrP family. Heterodimer of a catalytic subunit (MsrP) and a heme-binding subunit (MsrQ). It depends on Mo-molybdopterin as a cofactor. In terms of processing, predicted to be exported by the Tat system. The position of the signal peptide cleavage has not been experimentally proven.

It is found in the periplasm. The enzyme catalyses L-methionyl-[protein] + a quinone + H2O = L-methionyl-(S)-S-oxide-[protein] + a quinol. It catalyses the reaction L-methionyl-[protein] + a quinone + H2O = L-methionyl-(R)-S-oxide-[protein] + a quinol. Functionally, part of the MsrPQ system that repairs oxidized periplasmic proteins containing methionine sulfoxide residues (Met-O), using respiratory chain electrons. Thus protects these proteins from oxidative-stress damage caused by reactive species of oxygen and chlorine generated by the host defense mechanisms. MsrPQ is essential for the maintenance of envelope integrity under bleach stress, rescuing a wide series of structurally unrelated periplasmic proteins from methionine oxidation, including the primary periplasmic chaperone SurA and the lipoprotein Pal. The catalytic subunit MsrP is non-stereospecific, being able to reduce both (R-) and (S-) diastereoisomers of methionine sulfoxide. The protein is Protein-methionine-sulfoxide reductase catalytic subunit MsrP of Salmonella arizonae (strain ATCC BAA-731 / CDC346-86 / RSK2980).